A 282-amino-acid chain; its full sequence is Bifunctional protein FolD (282 aa).

Residues 165 to 167 (NRS), S190, and I231 each bind NADP(+).

It belongs to the tetrahydrofolate dehydrogenase/cyclohydrolase family. As to quaternary structure, homodimer.

It catalyses the reaction (6R)-5,10-methylene-5,6,7,8-tetrahydrofolate + NADP(+) = (6R)-5,10-methenyltetrahydrofolate + NADPH. The enzyme catalyses (6R)-5,10-methenyltetrahydrofolate + H2O = (6R)-10-formyltetrahydrofolate + H(+). The protein operates within one-carbon metabolism; tetrahydrofolate interconversion. Functionally, catalyzes the oxidation of 5,10-methylenetetrahydrofolate to 5,10-methenyltetrahydrofolate and then the hydrolysis of 5,10-methenyltetrahydrofolate to 10-formyltetrahydrofolate. In Clostridium botulinum (strain ATCC 19397 / Type A), this protein is Bifunctional protein FolD.